Here is a 234-residue protein sequence, read N- to C-terminus: Thiamine-phosphate synthase (234 aa).

4-amino-2-methyl-5-(diphosphooxymethyl)pyrimidine contacts are provided by residues 65-69 (QYRNK) and asparagine 97. Residues aspartate 98 and aspartate 117 each coordinate Mg(2+). A 4-amino-2-methyl-5-(diphosphooxymethyl)pyrimidine-binding site is contributed by serine 136. 2-[(2R,5Z)-2-carboxy-4-methylthiazol-5(2H)-ylidene]ethyl phosphate is bound at residue 163–165 (SHT). Lysine 166 serves as a coordination point for 4-amino-2-methyl-5-(diphosphooxymethyl)pyrimidine. Residues glycine 192 and 212-213 (IS) contribute to the 2-[(2R,5Z)-2-carboxy-4-methylthiazol-5(2H)-ylidene]ethyl phosphate site.

It belongs to the thiamine-phosphate synthase family. Mg(2+) serves as cofactor.

The catalysed reaction is 2-[(2R,5Z)-2-carboxy-4-methylthiazol-5(2H)-ylidene]ethyl phosphate + 4-amino-2-methyl-5-(diphosphooxymethyl)pyrimidine + 2 H(+) = thiamine phosphate + CO2 + diphosphate. It catalyses the reaction 2-(2-carboxy-4-methylthiazol-5-yl)ethyl phosphate + 4-amino-2-methyl-5-(diphosphooxymethyl)pyrimidine + 2 H(+) = thiamine phosphate + CO2 + diphosphate. The enzyme catalyses 4-methyl-5-(2-phosphooxyethyl)-thiazole + 4-amino-2-methyl-5-(diphosphooxymethyl)pyrimidine + H(+) = thiamine phosphate + diphosphate. Its pathway is cofactor biosynthesis; thiamine diphosphate biosynthesis; thiamine phosphate from 4-amino-2-methyl-5-diphosphomethylpyrimidine and 4-methyl-5-(2-phosphoethyl)-thiazole: step 1/1. Condenses 4-methyl-5-(beta-hydroxyethyl)thiazole monophosphate (THZ-P) and 2-methyl-4-amino-5-hydroxymethyl pyrimidine pyrophosphate (HMP-PP) to form thiamine monophosphate (TMP). The chain is Thiamine-phosphate synthase from Xylella fastidiosa (strain Temecula1 / ATCC 700964).